Here is a 913-residue protein sequence, read N- to C-terminus: Polyribonucleotide nucleotidyltransferase (913 aa).

Positions 407–427 are disordered; the sequence is YMHNYEMPPYSTGETGRVGSP. Mg(2+)-binding residues include Asp-521 and Asp-527. A KH domain is found at 587 to 646; sequence PRIITTSVPVEKIGEVIGPKGKMINQIQEDTGAEIAIEDDGTVFISSEGGEAAEKAKAII. An S1 motif domain is found at 658–730; the sequence is GETYNGKVVK…DRGKISLAIP (73 aa). Residues 727–913 are disordered; it reads LAIPGFEDQE…VRRDFDPFED (187 aa). 3 stretches are compositionally biased toward basic and acidic residues: residues 742-789, 797-865, and 872-898; these read SRGD…RRSD, DRPR…DRRG, and RGSD…ERTE.

Belongs to the polyribonucleotide nucleotidyltransferase family. It depends on Mg(2+) as a cofactor.

The protein localises to the cytoplasm. It catalyses the reaction RNA(n+1) + phosphate = RNA(n) + a ribonucleoside 5'-diphosphate. Involved in mRNA degradation. Catalyzes the phosphorolysis of single-stranded polyribonucleotides processively in the 3'- to 5'-direction. The protein is Polyribonucleotide nucleotidyltransferase of Bifidobacterium longum (strain DJO10A).